A 1242-amino-acid chain; its full sequence is ATP-dependent helicase/nuclease subunit A (1242 aa).

The UvrD-like helicase ATP-binding domain occupies 13–486 (SQWTDDQWKA…IDLAKNFRSR (474 aa)). 34-41 (AAAGSGKT) serves as a coordination point for ATP. One can recognise a UvrD-like helicase C-terminal domain in the interval 506 to 806 (GEIEYDADAE…RIMTIHKSKG (301 aa)).

It belongs to the helicase family. AddA subfamily. Heterodimer of AddA and AddB/RexB. Mg(2+) serves as cofactor.

It catalyses the reaction Couples ATP hydrolysis with the unwinding of duplex DNA by translocating in the 3'-5' direction.. The catalysed reaction is ATP + H2O = ADP + phosphate + H(+). The heterodimer acts as both an ATP-dependent DNA helicase and an ATP-dependent, dual-direction single-stranded exonuclease. Recognizes the chi site generating a DNA molecule suitable for the initiation of homologous recombination. The AddA nuclease domain is required for chi fragment generation; this subunit has the helicase and 3' -&gt; 5' nuclease activities. The polypeptide is ATP-dependent helicase/nuclease subunit A (Bacillus cytotoxicus (strain DSM 22905 / CIP 110041 / 391-98 / NVH 391-98)).